We begin with the raw amino-acid sequence, 141 residues long: ATP synthase epsilon chain (141 aa).

Belongs to the ATPase epsilon chain family. In terms of assembly, F-type ATPases have 2 components, CF(1) - the catalytic core - and CF(0) - the membrane proton channel. CF(1) has five subunits: alpha(3), beta(3), gamma(1), delta(1), epsilon(1). CF(0) has three main subunits: a, b and c.

The protein resides in the cell inner membrane. Produces ATP from ADP in the presence of a proton gradient across the membrane. This chain is ATP synthase epsilon chain, found in Teredinibacter turnerae (strain ATCC 39867 / T7901).